Reading from the N-terminus, the 167-residue chain is Aphrodisin (167 aa).

An N-terminal signal peptide occupies residues Met-1 to Ala-16. Gln-17 bears the Pyrrolidone carboxylic acid mark. 2 cysteine pairs are disulfide-bonded: Cys-54-Cys-58 and Cys-73-Cys-165. 2 N-linked (GlcNAc...) asparagine glycosylation sites follow: Asn-57 and Asn-85.

The protein belongs to the calycin superfamily. Lipocalin family. As to expression, expressed in the vagina, uterus, and Bartholin's glands of female hamsters. Secreted in vaginal discharge.

The protein resides in the secreted. In terms of biological role, acts as an aphrodisiac pheromone, reliably eliciting copulatory behavior from male hamster. In Mesocricetus auratus (Golden hamster), this protein is Aphrodisin.